The following is an 88-amino-acid chain: Large ribosomal subunit protein bL27 (88 aa).

Positions 1–23 (MAHKKGTGSTRNGRDSNAQRLGV) are disordered. Positions 7–19 (TGSTRNGRDSNAQ) are enriched in polar residues.

The protein belongs to the bacterial ribosomal protein bL27 family.

The sequence is that of Large ribosomal subunit protein bL27 (rpmA) from Synechococcus elongatus (strain ATCC 33912 / PCC 7942 / FACHB-805) (Anacystis nidulans R2).